Here is a 41-residue protein sequence, read N- to C-terminus: Large ribosomal subunit protein bL36 (41 aa).

This sequence belongs to the bacterial ribosomal protein bL36 family.

This is Large ribosomal subunit protein bL36 from Chelativorans sp. (strain BNC1).